The sequence spans 230 residues: Somatolactin (230 aa).

The first 23 residues, 1–23 (MIKTKVLQAWMGIWLCAVNGLLG), serve as a signal peptide directing secretion. Cystine bridges form between Cys28-Cys38, Cys87-Cys202, and Cys219-Cys227. Asn177 carries N-linked (GlcNAc...) asparagine glycosylation.

It belongs to the somatotropin/prolactin family.

Its subcellular location is the secreted. This Ictalurus punctatus (Channel catfish) protein is Somatolactin.